A 438-amino-acid chain; its full sequence is Enolase (438 aa).

(2R)-2-phosphoglycerate is bound at residue Gln163. The Proton donor role is filled by Glu205. Mg(2+) contacts are provided by Asp243, Glu292, and Asp319. The (2R)-2-phosphoglycerate site is built by Lys344, Arg373, Ser374, and Lys395. The active-site Proton acceptor is Lys344.

This sequence belongs to the enolase family. The cofactor is Mg(2+).

It is found in the cytoplasm. The protein localises to the secreted. It localises to the cell surface. The catalysed reaction is (2R)-2-phosphoglycerate = phosphoenolpyruvate + H2O. It participates in carbohydrate degradation; glycolysis; pyruvate from D-glyceraldehyde 3-phosphate: step 4/5. Its function is as follows. Catalyzes the reversible conversion of 2-phosphoglycerate (2-PG) into phosphoenolpyruvate (PEP). It is essential for the degradation of carbohydrates via glycolysis. The sequence is that of Enolase from Streptococcus agalactiae.